The primary structure comprises 212 residues: Large ribosomal subunit protein uL3 (212 aa).

Residues 134 to 154 form a disordered region; sequence RKTHGNSVSHRVPGSIGQNQT. Gln153 is subject to N5-methylglutamine.

Belongs to the universal ribosomal protein uL3 family. Part of the 50S ribosomal subunit. Forms a cluster with proteins L14 and L19. Methylated by PrmB.

One of the primary rRNA binding proteins, it binds directly near the 3'-end of the 23S rRNA, where it nucleates assembly of the 50S subunit. The polypeptide is Large ribosomal subunit protein uL3 (Dichelobacter nodosus (strain VCS1703A)).